The chain runs to 420 residues: Serine hydroxymethyltransferase (420 aa).

Residues leucine 121 and glycine 125–leucine 127 contribute to the (6S)-5,6,7,8-tetrahydrofolate site. Lysine 230 is modified (N6-(pyridoxal phosphate)lysine). Residues glutamate 246 and serine 354 to phenylalanine 356 each bind (6S)-5,6,7,8-tetrahydrofolate.

It belongs to the SHMT family. As to quaternary structure, homodimer. Requires pyridoxal 5'-phosphate as cofactor.

The protein localises to the cytoplasm. The enzyme catalyses (6R)-5,10-methylene-5,6,7,8-tetrahydrofolate + glycine + H2O = (6S)-5,6,7,8-tetrahydrofolate + L-serine. Its pathway is one-carbon metabolism; tetrahydrofolate interconversion. It participates in amino-acid biosynthesis; glycine biosynthesis; glycine from L-serine: step 1/1. In terms of biological role, catalyzes the reversible interconversion of serine and glycine with tetrahydrofolate (THF) serving as the one-carbon carrier. This reaction serves as the major source of one-carbon groups required for the biosynthesis of purines, thymidylate, methionine, and other important biomolecules. Also exhibits THF-independent aldolase activity toward beta-hydroxyamino acids, producing glycine and aldehydes, via a retro-aldol mechanism. The chain is Serine hydroxymethyltransferase from Rickettsia peacockii (strain Rustic).